We begin with the raw amino-acid sequence, 977 residues long: Macrophage colony-stimulating factor 1 receptor (977 aa).

Positions 1–19 (MELGPPLVLLLATVWHGQG) are cleaved as a signal peptide. Residues 20–515 (APVIEPSGPE…QLPDESLFTP (496 aa)) are Extracellular-facing. 5 consecutive Ig-like C2-type domains span residues 24–104 (EPSG…VKDP), 107–197 (SWNL…KVNR), 204–298 (QIKL…VVES), 299–397 (AYLN…LTLR), and 398–503 (YPPE…SLGQ). 3 disulfides stabilise this stretch: Cys42–Cys84, Cys127–Cys177, and Cys224–Cys278. N-linked (GlcNAc...) asparagine glycans are attached at residues Asn45 and Asn73. Asn302, Asn335, Asn389, Asn410, Asn449, Asn478, and Asn491 each carry an N-linked (GlcNAc...) asparagine glycan. A disulfide bond links Cys417 and Cys483. A helical membrane pass occupies residues 516–536 (VVVACMSVMSLLVLLLLLLLY). Topologically, residues 537-977 (KYKQKPKYQV…LLQPNNYQFC (441 aa)) are cytoplasmic. Positions 540–572 (QKPKYQVRWKIIERYEGNSYTFIDPTQLPYNEK) are regulatory juxtamembrane domain. 2 positions are modified to phosphotyrosine; by autocatalysis: Tyr544 and Tyr559. One can recognise a Protein kinase domain in the interval 580–913 (LQFGKTLGAG…ICFLLQEQAR (334 aa)). Residues 586–594 (LGAGAFGKV) and Lys614 each bind ATP. Phosphotyrosine; by autocatalysis is present on residues Tyr697 and Tyr706. Position 711 is a phosphoserine (Ser711). Tyr721 carries the post-translational modification Phosphotyrosine; by autocatalysis. Asp776 serves as the catalytic Proton acceptor. An activation loop region spans residues 794–816 (DFGLARDIMNDSNYVVKGNARLP). 2 positions are modified to phosphotyrosine; by autocatalysis: Tyr807 and Tyr921. Residues 921–957 (YANLPSSGGSSGSDSGGGSSGGSSSEPEEESSSEHLA) form a disordered region. A compositionally biased stretch (gly residues) spans 929-941 (GSSGSDSGGGSSG). Tyr974 carries the post-translational modification Phosphotyrosine; by autocatalysis.

Belongs to the protein kinase superfamily. Tyr protein kinase family. CSF-1/PDGF receptor subfamily. In terms of assembly, monomer. Homodimer. Interacts with CSF1 and IL34. Interaction with dimeric CSF1 or IL34 leads to receptor homodimerization. Interacts with INPPL1/SHIP2 and THOC5. Interacts (tyrosine phosphorylated) with PLCG2 (via SH2 domain). Interacts (tyrosine phosphorylated) with PIK3R1 (via SH2 domain). Interacts (tyrosine phosphorylated) with FYN, YES1 and SRC (via SH2 domain). Interacts (tyrosine phosphorylated) with CBL, GRB2 and SLA2. In terms of processing, autophosphorylated in response to CSF1 or IL34 binding. Phosphorylation at Tyr-559 is important for normal down-regulation of signaling by ubiquitination, internalization and degradation. Phosphorylation at Tyr-559 and Tyr-807 is important for interaction with SRC family members, including FYN, YES1 and SRC, and for subsequent activation of these protein kinases. Phosphorylation at Tyr-697 and Tyr-921 is important for interaction with GRB2. Phosphorylation at Tyr-721 is important for interaction with PIK3R1. Phosphorylation at Tyr-721 and Tyr-807 is important for interaction with PLCG2. Phosphorylation at Tyr-974 is important for interaction with CBL. Dephosphorylation by PTPN2 negatively regulates downstream signaling and macrophage differentiation. Post-translationally, ubiquitinated. Becomes rapidly polyubiquitinated after autophosphorylation, leading to its degradation. As to expression, widely expressed.

The protein resides in the cell membrane. The catalysed reaction is L-tyrosyl-[protein] + ATP = O-phospho-L-tyrosyl-[protein] + ADP + H(+). Present in an inactive conformation in the absence of bound ligand. CSF1 or IL34 binding leads to dimerization and activation by autophosphorylation on tyrosine residues. Inhibited by imatinib/STI-571 (Gleevec), dasatinib, sunitinib/SU11248, lestaurtinib/CEP-701, midostaurin/PKC-412, Ki20227, linifanib/ABT-869, Axitinib/AG013736, sorafenib/BAY 43-9006 and GW2580. Functionally, tyrosine-protein kinase that acts as a cell-surface receptor for CSF1 and IL34 and plays an essential role in the regulation of survival, proliferation and differentiation of hematopoietic precursor cells, especially mononuclear phagocytes, such as macrophages and monocytes. Promotes the release of pro-inflammatory chemokines in response to IL34 and CSF1, and thereby plays an important role in innate immunity and in inflammatory processes. Plays an important role in the regulation of osteoclast proliferation and differentiation, the regulation of bone resorption, and is required for normal bone and tooth development. Required for normal male and female fertility, and for normal development of milk ducts and acinar structures in the mammary gland during pregnancy. Promotes reorganization of the actin cytoskeleton, regulates formation of membrane ruffles, cell adhesion and cell migration, and promotes cancer cell invasion. Activates several signaling pathways in response to ligand binding, including the ERK1/2 and the JNK pathway. Phosphorylates PIK3R1, PLCG2, GRB2, SLA2 and CBL. Activation of PLCG2 leads to the production of the cellular signaling molecules diacylglycerol and inositol 1,4,5-trisphosphate, that then lead to the activation of protein kinase C family members, especially PRKCD. Phosphorylation of PIK3R1, the regulatory subunit of phosphatidylinositol 3-kinase, leads to activation of the AKT1 signaling pathway. Activated CSF1R also mediates activation of the MAP kinases MAPK1/ERK2 and/or MAPK3/ERK1, and of the SRC family kinases SRC, FYN and YES1. Activated CSF1R transmits signals both via proteins that directly interact with phosphorylated tyrosine residues in its intracellular domain, or via adapter proteins, such as GRB2. Promotes activation of STAT family members STAT3, STAT5A and/or STAT5B. Promotes tyrosine phosphorylation of SHC1 and INPP5D/SHIP-1. Receptor signaling is down-regulated by protein phosphatases, such as INPP5D/SHIP-1, that dephosphorylate the receptor and its downstream effectors, and by rapid internalization of the activated receptor. In the central nervous system, may play a role in the development of microglia macrophages. The sequence is that of Macrophage colony-stimulating factor 1 receptor (Csf1r) from Mus musculus (Mouse).